We begin with the raw amino-acid sequence, 227 residues long: Isopentenyl-diphosphate Delta-isomerase 1 (227 aa).

Lys36 lines the substrate pocket. Mg(2+) contacts are provided by His40 and His51. The Nudix hydrolase domain occupies 49–199; it reads LLHRAFSVFL…EIKITPWFQI (151 aa). Positions 70 and 74 each coordinate substrate. Residue Cys86 is the Proton acceptor of the active site. Ser87 provides a ligand contact to substrate. Mg(2+) is bound by residues Glu146 and Glu148. Residue Glu148 is part of the active site. An N6-acetyllysine modification is found at Lys176.

Belongs to the IPP isomerase type 1 family. Monomer. Mg(2+) is required as a cofactor.

It is found in the peroxisome. The enzyme catalyses isopentenyl diphosphate = dimethylallyl diphosphate. It functions in the pathway isoprenoid biosynthesis; dimethylallyl diphosphate biosynthesis; dimethylallyl diphosphate from isopentenyl diphosphate: step 1/1. Catalyzes the 1,3-allylic rearrangement of the homoallylic substrate isopentenyl (IPP) to its highly electrophilic allylic isomer, dimethylallyl diphosphate (DMAPP). The polypeptide is Isopentenyl-diphosphate Delta-isomerase 1 (IDI1) (Bos taurus (Bovine)).